The following is a 94-amino-acid chain: Late cornified envelope protein 3C (94 aa).

Residues 1–10 show a composition bias toward low complexity; it reads MSCQQNQQQC. 2 disordered regions span residues 1-35 and 65-94; these read MSCQ…PPSS and CRRQ…GGCC. The segment covering 11 to 34 has biased composition (pro residues); sequence QPPPSCPSPKCPPKSPAQCLPPPS. Residues 78 to 94 show a composition bias toward gly residues; the sequence is GQQGGGSCRGHGSGGCC.

It belongs to the LCE family. Interacts with CYSRT1; the interaction is direct. In terms of tissue distribution, skin-specific. Expression was readily detected in adult trunk skin, adult arm skin, fetal skin, penal skin, vulva, esophagus and tongue. Not expressed in the cervix, rectum, lung, colon, or placenta.

A structural component of the cornified envelope of the stratum corneum involved in innate cutaneous host defense. Possesses defensin-like antimicrobial activity against a broad spectrum of Gram-positive and Gram-negative bacteria, both aerobic and anaerobic species. Upon inflammation, may regulate skin barrier repair by shaping cutaneous microbiota composition and immune response to bacterial antigens. This is Late cornified envelope protein 3C from Homo sapiens (Human).